The chain runs to 1054 residues: Reverse gyrase (1054 aa).

The RG N-terminal-type zinc finger occupies 1 to 43; sequence MIPVVYSNLCPVCGGDLESKEIEKHVCFRKKRSLCLFPEDFLL. The Zn(2+) site is built by Cys10, Cys13, Cys27, and Cys35. Cys35 and Cys650 are disulfide-bonded. ATP contacts are provided by Gln61, Lys84, Thr85, and Ser86. A Helicase ATP-binding domain is found at 65-245; it reads AKRILRKESF…FRQLLNFDIG (181 aa). A DEAD box motif is present at residues 182–185; it reads DDVD. The tract at residues 352–427 is latch region; the sequence is PSFRVTIEDI…EGEVIFPDLR (76 aa). Residues 502-1054 form a topoisomerase I region; sequence DLIKPALFIV…DLYAEIKSID (553 aa). The 157-residue stretch at 506-662 folds into the Toprim domain; it reads PALFIVESPT…VKRAEFHEVT (157 aa). Glu512 contacts Mg(2+). The RG C-terminal-type zinc finger occupies 581–609; it reads IKRCRDCGYQFTEDRESCPKCGSENVDNS. Zn(2+) contacts are provided by Cys584, Cys587, Cys598, and Cys601. Residue Asp631 participates in Mg(2+) binding. A Topo IA-type catalytic domain is found at 677-1054; the sequence is DENLVKAQVV…DLYAEIKSID (378 aa). Tyr809 functions as the O-(5'-phospho-DNA)-tyrosine intermediate in the catalytic mechanism.

The protein in the N-terminal section; belongs to the DEAD box helicase family. DDVD subfamily. In the C-terminal section; belongs to the type IA topoisomerase family. Monomer. It depends on Zn(2+) as a cofactor. The cofactor is Mg(2+).

Its subcellular location is the cytoplasm. It carries out the reaction ATP + H2O = ADP + phosphate + H(+). Functionally, modifies the topological state of DNA by introducing positive supercoils in an ATP-dependent process, increasing the linking number in steps of +1. Very efficient supercoiling occurs on relaxed DNA with a single-stranded bubble; the minimal bubble is 20 nucleotides (nt) and up to 10 positive supercoils can be introduced into a 3.1 kb plasmid with a 50 nt bubble. Positively supercoils DNA with all (d)NTPS, although it requires about 10-fold more of non-(d)ATP. In the absence of ATP (or at low levels of enzyme), or in the presence of ADP, relaxes negative supercoils. Only relaxes positive supercoils when the substrate contains a bubble. Also promotes strand annealing of complementary ssDNA circles. Binds to single-stranded DNA, transiently cleaves and then rejoins the ends, introducing a positive supercoil in the process. The scissile phosphodiester is attacked by the catalytic tyrosine of the enzyme, resulting in the formation of a DNA-(5'-phosphotyrosyl)-enzyme intermediate. Probably involved in rewinding DNA strands in regions of the chromosome that have opened up to allow replication, transcription, DNA repair and/or for DNA protection. Its function is as follows. In vitro protects DNA against degradation at 90 degrees Celsius, reducing dsDNA breakage about 8-fold; ATP hydrolysis is not necessary, while ADP decreases the protection somewhat. Coats all forms of dsDNA; the DNA is protected against cleavage and transcription. Recognizes nicked DNA and forms a coat at the nicking site, which may help hold DNA in a structure amenable to repair. In Archaeoglobus fulgidus (strain ATCC 49558 / DSM 4304 / JCM 9628 / NBRC 100126 / VC-16), this protein is Reverse gyrase.